Consider the following 325-residue polypeptide: NADH-quinone oxidoreductase subunit H (325 aa).

The next 8 membrane-spanning stretches (helical) occupy residues 11–31 (ILISIVKAVVILLVVVTCGAF), 81–101 (VIFTLAPMIAFTSLLLAFAIV), 114–134 (IGILFFLMMAGLAVYAVLFAG), 149–169 (ASAQTLSYEVFIGLSLMGVVA), 186–206 (MWNVIPQFFGFITFAIAGVAV), 237–257 (FFVGEYIGIVTVSALIVTLFF), 265–285 (LPPFVWFALKTAFFMMMFILI), and 304–324 (VCLPLTLLNLLATAAVILYNA).

The protein belongs to the complex I subunit 1 family. In terms of assembly, NDH-1 is composed of 13 different subunits. Subunits NuoA, H, J, K, L, M, N constitute the membrane sector of the complex.

It is found in the cell inner membrane. It catalyses the reaction a quinone + NADH + 5 H(+)(in) = a quinol + NAD(+) + 4 H(+)(out). NDH-1 shuttles electrons from NADH, via FMN and iron-sulfur (Fe-S) centers, to quinones in the respiratory chain. The immediate electron acceptor for the enzyme in this species is believed to be ubiquinone. Couples the redox reaction to proton translocation (for every two electrons transferred, four hydrogen ions are translocated across the cytoplasmic membrane), and thus conserves the redox energy in a proton gradient. This subunit may bind ubiquinone. The chain is NADH-quinone oxidoreductase subunit H from Serratia proteamaculans (strain 568).